The primary structure comprises 494 residues: Ubiquitin carboxyl-terminal hydrolase 27 (494 aa).

Residues 30-50 form a helical membrane-spanning segment; that stretch reads LSFAGLLGVAGFVFAQQHGLF. Residues 74 to 494 enclose the USP domain; the sequence is PGLQNLGNNC…EASLLFYERL (421 aa). Cysteine 83 functions as the Nucleophile in the catalytic mechanism. Residue histidine 440 is the Proton acceptor of the active site.

This sequence belongs to the peptidase C19 family.

The protein localises to the membrane. The catalysed reaction is Thiol-dependent hydrolysis of ester, thioester, amide, peptide and isopeptide bonds formed by the C-terminal Gly of ubiquitin (a 76-residue protein attached to proteins as an intracellular targeting signal).. Its function is as follows. Recognizes and hydrolyzes the peptide bond at the C-terminal Gly of ubiquitin. Involved in the processing of poly-ubiquitin precursors as well as that of ubiquitinated proteins. This Arabidopsis thaliana (Mouse-ear cress) protein is Ubiquitin carboxyl-terminal hydrolase 27 (UBP27).